Here is a 559-residue protein sequence, read N- to C-terminus: Protochlorophyllide-dependent translocon component 52, chloroplastic (559 aa).

The N-terminal 55 residues, 1 to 55 (MEAALAACALPSLRILNTKPRFRCSFSNPSLPISPNSLITRKSSRFTTAVSSPPS), are a transit peptide targeting the chloroplast. Residues 44–70 (SRFTTAVSSPPSSSAATSTNSPPEPEA) are disordered. The segment covering 47–64 (TTAVSSPPSSSAATSTNS) has biased composition (low complexity). The region spanning 85–195 (WYPVMPICDL…STVQHEIIWF (111 aa)) is the Rieske domain. 4 residues coordinate [2Fe-2S] cluster: C127, H129, C147, and H150. 2 residues coordinate Fe cation: H248 and H253. A Redox-active motif motif is present at residues 483–486 (CSSC). The next 2 membrane-spanning stretches (helical) occupy residues 493 to 513 (LNALEVILQIASVAMIGVMAV) and 525 to 545 (IAVLVAAVLSFAASKWLSHFI).

Requires [2Fe-2S] cluster as cofactor.

The protein resides in the plastid. It localises to the chloroplast inner membrane. It catalyses the reaction protochlorophyllide a + 4 reduced [2Fe-2S]-[ferredoxin] + 2 O2 + 5 H(+) = protochlorophyllide b + 4 oxidized [2Fe-2S]-[ferredoxin] + 3 H2O. Its activity is regulated as follows. Down-regulated by light. Its function is as follows. Part of a translocon most abundantly expressed in etiolated plants and involved in the protochlorophyllide-dependent import of the precursor NADPH:protochlorophyllide oxidoreductase A (pPORA). The polypeptide is Protochlorophyllide-dependent translocon component 52, chloroplastic (Arabidopsis thaliana (Mouse-ear cress)).